A 433-amino-acid polypeptide reads, in one-letter code: Trigger factor (433 aa).

One can recognise a PPIase FKBP-type domain in the interval 163 to 248 (GDTVNIDFSG…VNEIKFKDVP (86 aa)).

This sequence belongs to the FKBP-type PPIase family. Tig subfamily.

The protein localises to the cytoplasm. The catalysed reaction is [protein]-peptidylproline (omega=180) = [protein]-peptidylproline (omega=0). Its function is as follows. Involved in protein export. Acts as a chaperone by maintaining the newly synthesized protein in an open conformation. Functions as a peptidyl-prolyl cis-trans isomerase. The polypeptide is Trigger factor (Staphylococcus epidermidis (strain ATCC 35984 / DSM 28319 / BCRC 17069 / CCUG 31568 / BM 3577 / RP62A)).